The sequence spans 211 residues: Ribonuclease HII (211 aa).

The 190-residue stretch at 11-200 folds into the RNase H type-2 domain; it reads EFIAGVDEVG…VKKLLSTLLS (190 aa). A divalent metal cation contacts are provided by aspartate 17, glutamate 18, and aspartate 109.

It belongs to the RNase HII family. Requires Mn(2+) as cofactor. It depends on Mg(2+) as a cofactor.

The protein resides in the cytoplasm. It catalyses the reaction Endonucleolytic cleavage to 5'-phosphomonoester.. Its function is as follows. Endonuclease that specifically degrades the RNA of RNA-DNA hybrids. The chain is Ribonuclease HII from Histophilus somni (strain 2336) (Haemophilus somnus).